A 216-amino-acid chain; its full sequence is Maintenance of carboxysome distribution protein A (216 aa).

The ATP site is built by Gly18, Gly19, Gly21, Lys22, Thr23, Thr24, and Gln47. Thr23 is a binding site for Mg(2+).

It belongs to the ParA family. McdA subfamily. In terms of assembly, homodimerizes in the presence of ATP. Each subunit binds 1 ATP molecule; some residues cross the dimer interface to contact ATP in the other subunit. Forms a complex with McdB.

It localises to the cytoplasm. Its subcellular location is the nucleoid. The enzyme catalyses ATP + H2O = ADP + phosphate + H(+). McdA and McdB together mediate carboxysome (Cb) spacing, size, ultrastructure and probably inheritance in the cell, together they prevent Cb aggregation. McdA is an ATPase that forms dynamic gradients on the nucleoid in response to adapter protein McdB, which associates with carboxysomes. The interplay between McdA gradients on the nucleoid and McdB-bound carboxysomes result in the equal spacing of Cbs along the cell length. In terms of biological role, incorrect positioning (aggregation) of carboxysomes results in reduced CO(2) fixation by encapsulated ribulose-1,5-bisphosphate carboxylase (RuBisCO, cbbL/cbbS), which leads to slower growth. The protein is Maintenance of carboxysome distribution protein A of Gloeobacter kilaueensis (strain ATCC BAA-2537 / CCAP 1431/1 / ULC 316 / JS1).